The sequence spans 185 residues: HTH-type transcriptional regulator SAR2658 (185 aa).

The region spanning K6–F66 is the HTH tetR-type domain. The segment at residues S29 to F48 is a DNA-binding region (H-T-H motif).

The sequence is that of HTH-type transcriptional regulator SAR2658 from Staphylococcus aureus (strain MRSA252).